We begin with the raw amino-acid sequence, 921 residues long: Isoleucine--tRNA ligase (921 aa).

Positions 57–67 (PYANGELHMGH) match the 'HIGH' region motif. E552 provides a ligand contact to L-isoleucyl-5'-AMP. Residues 593-597 (KMSKS) carry the 'KMSKS' region motif. K596 is an ATP binding site. Positions 888, 891, 908, and 911 each coordinate Zn(2+).

The protein belongs to the class-I aminoacyl-tRNA synthetase family. IleS type 1 subfamily. As to quaternary structure, monomer. Zn(2+) serves as cofactor.

It localises to the cytoplasm. It carries out the reaction tRNA(Ile) + L-isoleucine + ATP = L-isoleucyl-tRNA(Ile) + AMP + diphosphate. Functionally, catalyzes the attachment of isoleucine to tRNA(Ile). As IleRS can inadvertently accommodate and process structurally similar amino acids such as valine, to avoid such errors it has two additional distinct tRNA(Ile)-dependent editing activities. One activity is designated as 'pretransfer' editing and involves the hydrolysis of activated Val-AMP. The other activity is designated 'posttransfer' editing and involves deacylation of mischarged Val-tRNA(Ile). The chain is Isoleucine--tRNA ligase from Listeria welshimeri serovar 6b (strain ATCC 35897 / DSM 20650 / CCUG 15529 / CIP 8149 / NCTC 11857 / SLCC 5334 / V8).